The primary structure comprises 205 residues: dITP/XTP pyrophosphatase (205 aa).

Residue 11 to 16 (TKNMGK) coordinates substrate. Mg(2+) contacts are provided by Glu44 and Asp73. Asp73 (proton acceptor) is an active-site residue. Residues Ser74, 158–161 (FGYD), Lys181, and 186–187 (HR) contribute to the substrate site.

The protein belongs to the HAM1 NTPase family. As to quaternary structure, homodimer. Mg(2+) is required as a cofactor.

The enzyme catalyses XTP + H2O = XMP + diphosphate + H(+). The catalysed reaction is dITP + H2O = dIMP + diphosphate + H(+). It carries out the reaction ITP + H2O = IMP + diphosphate + H(+). Pyrophosphatase that catalyzes the hydrolysis of nucleoside triphosphates to their monophosphate derivatives, with a high preference for the non-canonical purine nucleotides XTP (xanthosine triphosphate), dITP (deoxyinosine triphosphate) and ITP. Seems to function as a house-cleaning enzyme that removes non-canonical purine nucleotides from the nucleotide pool, thus preventing their incorporation into DNA/RNA and avoiding chromosomal lesions. The protein is dITP/XTP pyrophosphatase of Bacillus cereus (strain ATCC 14579 / DSM 31 / CCUG 7414 / JCM 2152 / NBRC 15305 / NCIMB 9373 / NCTC 2599 / NRRL B-3711).